Reading from the N-terminus, the 391-residue chain is Pectate lyase B (391 aa).

A signal peptide spans 1 to 30 (MKKTVRSLCSTALALTLGFTLLSGPASVQA). Positions 181, 203, and 207 each coordinate Ca(2+). R305 is an active-site residue.

This sequence belongs to the polysaccharide lyase 1 family. Ca(2+) is required as a cofactor.

It localises to the secreted. The enzyme catalyses Eliminative cleavage of (1-&gt;4)-alpha-D-galacturonan to give oligosaccharides with 4-deoxy-alpha-D-galact-4-enuronosyl groups at their non-reducing ends.. It catalyses the reaction Eliminative cleavage of (1-&gt;4)-alpha-D-galacturonan methyl ester to give oligosaccharides with 4-deoxy-6-O-methyl-alpha-D-galact-4-enuronosyl groups at their non-reducing ends.. The protein operates within glycan metabolism; pectin degradation. Its function is as follows. Catalyzes the depolymerization of both polygalacturonate and pectins of various methyl esterification degree, with an endo mode of action. Shows the highest activity on 20 to 34% methylated pectin but retains 67%, 51%, 25%, and 1% of its maximum activity on polygalacturonate and 8.5%, 55 to 70%, and 90% methylated pectin, respectively. The polypeptide is Pectate lyase B (Paenibacillus amylolyticus).